Reading from the N-terminus, the 701-residue chain is Translation initiation factor IF-2 (701 aa).

Residues 48 to 62 show a composition bias toward basic and acidic residues; sequence KIYKPEKAEQSEKSQ. The segment at 48-123 is disordered; it reads KIYKPEKAEQ…EPKEMPSKIT (76 aa). Composition is skewed to low complexity over residues 63 to 89 and 97 to 109; these read QKNTQNKQQTTHNKGNQSNKGNQNNKP and NNKNNKNNKNNKQ. Residues 110 to 119 show a composition bias toward basic and acidic residues; the sequence is PKQEEPKEMP. The region spanning 203–372 is the tr-type G domain; the sequence is ERPAVVTIMG…VLTSEVQELK (170 aa). The G1 stretch occupies residues 212–219; sequence GHVDHGKT. 212-219 contacts GTP; that stretch reads GHVDHGKT. Residues 237–241 are G2; that stretch reads GITQH. A G3 region spans residues 258-261; that stretch reads DTPG. Residues 258–262 and 312–315 contribute to the GTP site; these read DTPGH and NKID. The tract at residues 312 to 315 is G4; sequence NKID. Residues 348–350 are G5; sequence SAL.

It belongs to the TRAFAC class translation factor GTPase superfamily. Classic translation factor GTPase family. IF-2 subfamily.

It is found in the cytoplasm. Its function is as follows. One of the essential components for the initiation of protein synthesis. Protects formylmethionyl-tRNA from spontaneous hydrolysis and promotes its binding to the 30S ribosomal subunits. Also involved in the hydrolysis of GTP during the formation of the 70S ribosomal complex. The sequence is that of Translation initiation factor IF-2 from Staphylococcus saprophyticus subsp. saprophyticus (strain ATCC 15305 / DSM 20229 / NCIMB 8711 / NCTC 7292 / S-41).